Here is a 375-residue protein sequence, read N- to C-terminus: Trichodiene synthase (375 aa).

The protein belongs to the trichodiene synthase family.

It catalyses the reaction (2E,6E)-farnesyl diphosphate = trichodiene + diphosphate. It participates in sesquiterpene biosynthesis; trichothecene biosynthesis. TS is a member of the terpene cyclase group of enzymes. It catalyzes the isomerization and cyclization of farnesyl pyro-phosphate to form trichodiene, the first cyclic intermediate in the biosynthetic pathway for trichothecenes. It serves to branch trichothecene biosynthesis from the isoprenoid pathway. This Fusarium pseudograminearum (Wheat and barley crown-rot fungus) protein is Trichodiene synthase (TRI5).